The sequence spans 243 residues: Probable 6-oxopurine nucleoside phosphorylase (243 aa).

Residues T8 and 48-49 contribute to the phosphate site; that span reads RH. Position 174 (M174) interacts with substrate. Position 175 (T175) interacts with phosphate. Residue 198 to 200 coordinates substrate; that stretch reads NYA.

This sequence belongs to the PNP/MTAP phosphorylase family. MTAP subfamily. Homohexamer. Dimer of a homotrimer.

It catalyses the reaction a purine D-ribonucleoside + phosphate = a purine nucleobase + alpha-D-ribose 1-phosphate. It participates in purine metabolism; purine nucleoside salvage. Functionally, purine nucleoside phosphorylase which is highly specific for 6-oxopurine nucleosides. Cleaves guanosine or inosine to respective bases and sugar-1-phosphate molecules. Involved in purine salvage. The protein is Probable 6-oxopurine nucleoside phosphorylase of Archaeoglobus fulgidus (strain ATCC 49558 / DSM 4304 / JCM 9628 / NBRC 100126 / VC-16).